Here is a 555-residue protein sequence, read N- to C-terminus: Tau-cadinol synthase (555 aa).

Residues R270, D307, D311, R448, and D451 each coordinate (2E,6E)-farnesyl diphosphate. Mg(2+) is bound by residues D307 and D311. The DDXXD motif signature appears at 307–311; it reads DDTYD. D451, S455, and E459 together coordinate Mg(2+).

It belongs to the terpene synthase family. The cofactor is Mg(2+).

The enzyme catalyses (2E,6E)-farnesyl diphosphate + H2O = tau-cadinol + diphosphate. The catalysed reaction is (2E,6E)-farnesyl diphosphate = (+)-gamma-cadinene + diphosphate. It participates in secondary metabolite biosynthesis; terpenoid biosynthesis. Sesquiterpene synthase that catalyzes the formation of sesquiterpenes and sesquiterpenoid alcohols. Converts farnesyl diphosphate (FPP) to tau-cadinol. Converts FPP to gamma-cadinene. Tau-cadinol is the major product. In Lavandula angustifolia (Lavender), this protein is Tau-cadinol synthase.